Consider the following 1134-residue polypeptide: Spermatogenesis-associated protein 31C2 (1134 aa).

The chain crosses the membrane as a helical span at residues 23–43; the sequence is PWVLDIFLTLVFALGFFFLLL. 7 disordered regions span residues 54-87, 115-243, 477-504, 524-561, 727-807, 928-1007, and 1111-1134; these read PPSPSPKKRKRHLVSQRPAGRRGRPRGRMKNHSL, LEKG…LLTP, PGTSQAKGKPRPWQSSTSTGESSKEAQT, TPQNLSRGMESFPGKVLGATSEESERNLRKPLRSDSGS, MPER…PTVP, NMGH…PSIS, and AASSQQATLKNQSRPNRDRQIRDQ. The segment covering 59–87 has biased composition (basic residues); sequence PKKRKRHLVSQRPAGRRGRPRGRMKNHSL. The span at 132-148 shows a compositional bias: basic and acidic residues; the sequence is VGKRTPDGASRSSHEPT. Residues 185-201 show a composition bias toward low complexity; that stretch reads SSLSASQPPEPSLLLEH. Pro residues predominate over residues 204–235; that stretch reads PEPPALFPHPPRTPDPLACSPPPPKGFTPPPL. Over residues 489-504 the composition is skewed to polar residues; sequence WQSSTSTGESSKEAQT. 2 stretches are compositionally biased toward polar residues: residues 773–794 and 937–948; these read LTYSLTGSTQQSRSLGAQSSRA and PNCQGSCKSQSP. A compositionally biased stretch (basic and acidic residues) spans 954 to 970; that stretch reads HKRENSRKPNLEKHEEM. Residues 1111–1124 are compositionally biased toward polar residues; sequence AASSQQATLKNQSR. Positions 1125-1134 are enriched in basic and acidic residues; sequence PNRDRQIRDQ.

The protein belongs to the SPATA31 family.

It localises to the membrane. In terms of biological role, may play a role in spermatogenesis. The protein is Spermatogenesis-associated protein 31C2 (SPATA31C2) of Homo sapiens (Human).